Here is a 1240-residue protein sequence, read N- to C-terminus: Protein MMS22-like (1240 aa).

A compositionally biased stretch (polar residues) spans Met-1–Pro-11. The segment at Met-1–Pro-26 is disordered.

It belongs to the MMS22 family. MMS22L subfamily. Component of the MMS22L-TONSL complex.

The protein resides in the nucleus. Its subcellular location is the chromosome. Component of the MMS22L-TONSL complex, a complex that promotes homologous recombination-mediated repair of double-strand breaks (DSBs) at stalled or collapsed replication forks. The MMS22L-TONSL complex is required to maintain genome integrity during DNA replication. It mediates the assembly of RAD51 filaments on single-stranded DNA (ssDNA): the MMS22L-TONSL complex is recruited to DSBs following histone replacement by histone chaperones and eviction of the replication protein A complex (RPA/RP-A) from DSBs. Following recruitment to DSBs, the TONSL-MMS22L complex promotes recruitment of RAD51 filaments and subsequent homologous recombination. Within the complex, MMS22L acts by binding ssDNA. The protein is Protein MMS22-like (mms22l) of Danio rerio (Zebrafish).